The following is a 438-amino-acid chain: MVVARTLFSISATLIIFLALFLHVNAVQETREPKHESSRNTSTVDNLSDGEWHEHAVKDPEEIAAMVDMSIRNSTYRRKLGFFSSCSTGNPIDDCWRCDKKWHRRRKRLADCAIGFGRNAVGGRDGRYYIVTDPSDHDPVTPKPGTLRYAVIQDEPLWIVFKRDMVITLSQELIMNSFKTIDGRGVNVHIAGGACLTVQYVTNIIIHGINIHDCKRTGNAMVRSSESHYGWRTMADGDGISIFGSSHIWIDHNSLSSCADGLIDAIMGSTAITISNNYLTHHNEAILLGHTDSYTRDKMMQVTIAYNHFGEGLIQRMPRCRHGYFHVVNNDYTHWEMYAIGGSANPTINSQGNRFLAPGNRFAKEVTKRVGAGKGEWNNWNWRSQGDLMLNGAYFTSSGAGASANYARASSLAAKSSSLVGMLTSSSGALKCRIGTLC.

A signal peptide spans 1 to 26 (MVVARTLFSISATLIIFLALFLHVNA). 3 N-linked (GlcNAc...) asparagine glycosylation sites follow: N40, N46, and N73. 3 residues coordinate Ca(2+): D236, D260, and D264. Residue R316 is part of the active site.

The protein belongs to the polysaccharide lyase 1 family. Requires Ca(2+) as cofactor.

It catalyses the reaction Eliminative cleavage of (1-&gt;4)-alpha-D-galacturonan to give oligosaccharides with 4-deoxy-alpha-D-galact-4-enuronosyl groups at their non-reducing ends.. It participates in glycan metabolism; pectin degradation; 2-dehydro-3-deoxy-D-gluconate from pectin: step 2/5. The sequence is that of Putative pectate lyase 14 from Arabidopsis thaliana (Mouse-ear cress).